The chain runs to 172 residues: MDKPFRIYITGKPGIGKTTLLFNIYRILKEKNWRITGFYCPEVRVNNTRMGFKIKSVLSGKEAWLARVDARSGIRIGKYYVVLEDNFVRQLEEEIFSFPDIILIDEIGPMELSSVSLKNLINKILTSNYPVIAVVHRSIKFDDGVIYEVTIQNRDILLEEILGRVTSNKNNI.

Residues 11–18 (GKPGIGKT) and 101–108 (IILIDEIG) contribute to the ATP site.

This sequence belongs to the THEP1 NTPase family.

It carries out the reaction a ribonucleoside 5'-triphosphate + H2O = a ribonucleoside 5'-diphosphate + phosphate + H(+). Its function is as follows. Has nucleotide phosphatase activity towards ATP, GTP, CTP, TTP and UTP. May hydrolyze nucleoside diphosphates with lower efficiency. This is Nucleoside-triphosphatase THEP1 from Sulfolobus acidocaldarius (strain ATCC 33909 / DSM 639 / JCM 8929 / NBRC 15157 / NCIMB 11770).